The chain runs to 359 residues: Protein Wnt-8a (359 aa).

An N-terminal signal peptide occupies residues 1–25; sequence MNPCQIFASLVMSICCHILSSTAWS. Residues cysteine 55 and cysteine 66 are joined by a disulfide bond. N-linked (GlcNAc...) asparagine glycosylation occurs at asparagine 104. 10 cysteine pairs are disulfide-bonded: cysteine 105/cysteine 113, cysteine 115/cysteine 133, cysteine 181/cysteine 195, cysteine 183/cysteine 190, cysteine 260/cysteine 298, cysteine 276/cysteine 291, cysteine 295/cysteine 337, cysteine 313/cysteine 328, cysteine 315/cysteine 325, and cysteine 320/cysteine 321. The O-palmitoleoyl serine moiety is linked to residue serine 187. 2 N-linked (GlcNAc...) asparagine glycosylation sites follow: asparagine 263 and asparagine 282. The N-linked (GlcNAc...) asparagine glycan is linked to asparagine 348.

Belongs to the Wnt family. Palmitoleoylation is required for efficient binding to frizzled receptors. Depalmitoleoylation leads to Wnt signaling pathway inhibition. Post-translationally, proteolytic processing by tiki1 and tiki2 promotes oxidation and formation of large disulfide-bond oligomers, leading to inactivation of wnt8. As to expression, expressed in the margin of the pregastrula embryo destined to be the future mesoderm.

It localises to the secreted. The protein resides in the extracellular space. Its subcellular location is the extracellular matrix. Ligand for members of the frizzled family of seven transmembrane receptors. Required for mesoderm and neural ectoderm patterning during gastrulation. Involved in axis formation during embryonic development, via activation of canonical Wnt/CTNNB1 signaling. May be involved in the specification of the spatial patterns of expression of Gsc and other regulatory genes leading to the establishment of the embryonic axis. The chain is Protein Wnt-8a (wnt8a) from Danio rerio (Zebrafish).